Here is a 697-residue protein sequence, read N- to C-terminus: Serotransferrin (697 aa).

An N-terminal signal peptide occupies residues 1 to 19 (MRLTVGALLACAALGLCLA). Transferrin-like domains lie at 25 to 347 (VKWC…NQQE) and 360 to 682 (VKWC…NMRK). 2 cysteine pairs are disulfide-bonded: Cys-28–Cys-67 and Cys-38–Cys-58. Arg-42 carries the dimethylated arginine modification. Fe(3+) is bound by residues Asp-82 and Tyr-114. Disulfide bonds link Cys-137-Cys-213, Cys-156-Cys-350, Cys-177-Cys-193, Cys-180-Cys-196, Cys-190-Cys-198, Cys-246-Cys-260, Cys-363-Cys-395, and Cys-373-Cys-386. Residues Thr-139, Arg-143, Ala-145, and Gly-146 each contribute to the hydrogencarbonate site. Tyr-207 contacts Fe(3+). Residue His-268 coordinates Fe(3+). Position 388 is a phosphoserine (Ser-388). Fe(3+)-binding residues include Asp-410 and Tyr-448. 8 disulfide bridges follow: Cys-420–Cys-692, Cys-435–Cys-655, Cys-472–Cys-543, Cys-496–Cys-683, Cys-506–Cys-520, Cys-517–Cys-526, Cys-583–Cys-597, and Cys-633–Cys-638. Hydrogencarbonate-binding residues include Thr-474, Arg-478, Ala-480, and Gly-481. Residue Asn-513 is glycosylated (N-linked (GlcNAc...) asparagine). Tyr-537 is a binding site for Fe(3+). His-605 lines the Fe(3+) pocket. Ser-684 is subject to Phosphoserine.

The protein belongs to the transferrin family. As to quaternary structure, monomer. Part of a complex composed of SLC40A1/ferroportin, TF/transferrin and HEPH/hephaestin that transfers iron from cells to transferrin. In terms of tissue distribution, expressed by the liver and secreted in plasma.

The protein localises to the secreted. Its function is as follows. Transferrins are iron binding transport proteins which can bind two Fe(3+) ions in association with the binding of an anion, usually bicarbonate. It is responsible for the transport of iron from sites of absorption and heme degradation to those of storage and utilization. Serum transferrin may also have a further role in stimulating cell proliferation. The protein is Serotransferrin (Tf) of Mus musculus (Mouse).